The sequence spans 248 residues: PF03932 family protein CutC (248 aa).

The protein belongs to the CutC family. As to quaternary structure, homodimer.

The protein localises to the cytoplasm. This chain is PF03932 family protein CutC, found in Escherichia coli O9:H4 (strain HS).